A 107-amino-acid polypeptide reads, in one-letter code: U1-lycotoxin-Ls1v (107 aa).

The first 20 residues, 1-20, serve as a signal peptide directing secretion; sequence MMKVLVVVALLVTLISYSSS. The propeptide occupies 21–41; the sequence is EGIDDLEADELLSLTANEQTR. Disulfide bonds link C44/C59, C51/C68, C58/C86, and C70/C84.

The protein belongs to the neurotoxin 19 (CSTX) family. 04 (U1-Lctx) subfamily. In terms of tissue distribution, expressed by the venom gland.

It is found in the secreted. In Lycosa singoriensis (Wolf spider), this protein is U1-lycotoxin-Ls1v.